Here is a 644-residue protein sequence, read N- to C-terminus: MFQDNPLLAQLKQQLHSQTPRAEGVVKATEKGFGFLEVDAQKSYFIPPPQMKKVMHGDRIVAVIHTEKERESAEPEELIEPFLTRFVGKVQGKNDRLSIVPDHPLLKDAIPCRAARGVQHEFKEGDWAVAEMRRHPLKGDRSFYADLTQYITFADDHFVPWWVTLARHNLEKEAPNGVATEMLDEGLERQDLTALNFVTIDSASTEDMDDALYAEELADGRLQLTVAIADPTAWIAEGSKLDNTAKIRAFTNYLPGFNIPMLPRELSDDLCSLRANEVRPALACRMIIAADGTIDDDIAFFAATIESKAKLAYDNVSDWLENNGTWQPENEDIAQQIRLLHRICLSRSEWRHHHALVFKDRPDYRFVLGEKGEVLDIVAEPRRIANRIVEESMIAANLCAARVLRDKLGFGIYNVHTGFDPANADALAALLKTHGLHVDAEEVLTLEGFCKLRRELDAQPSGFLDSRIRRFQSFAEISTEPGPHFGLGLEAYATWTSPIRKYGDMINHRLLKAVIKGEAIARPQEDITQQMAERRRLNRMAERDVGDWLYARFLNDKAGTNTRFAAEIIDVSRGGMRVRLVDNGAIAFIPAPFLHAVRDELVCSQENGTVQIKGETVYKVTDVIDVTIAEVRMETRSIIARPAA.

The RNB domain maps to 189–516 (RQDLTALNFV…NHRLLKAVIK (328 aa)). The S1 motif domain maps to 561–643 (NTRFAAEIID…ETRSIIARPA (83 aa)).

It belongs to the RNR ribonuclease family. RNase II subfamily.

It is found in the cytoplasm. The catalysed reaction is Exonucleolytic cleavage in the 3'- to 5'-direction to yield nucleoside 5'-phosphates.. In terms of biological role, involved in mRNA degradation. Hydrolyzes single-stranded polyribonucleotides processively in the 3' to 5' direction. In Salmonella newport (strain SL254), this protein is Exoribonuclease 2.